A 213-amino-acid polypeptide reads, in one-letter code: MADKSHQCVIVGIAGASASGKSLIASTLYREVRERVGDENIGVIPEDAYYKDQSHLTMEERVKTNYDHPSAMDHSLLLQHLQMLKAGQAIDLPVYSYVEHTRTQKTIRLEPKKVIILEGILLLTDARLRQEMNFSIFVDTPLDICLMRRMKRDVNERGRSMDSVMAQYQKTVRPMFLQFIEPSKQYADIIVPRGGKNRIAIDILKAKINQFFE.

15–22 is a binding site for ATP; sequence GASASGKS.

Belongs to the uridine kinase family.

It localises to the cytoplasm. The catalysed reaction is uridine + ATP = UMP + ADP + H(+). It catalyses the reaction cytidine + ATP = CMP + ADP + H(+). Its pathway is pyrimidine metabolism; CTP biosynthesis via salvage pathway; CTP from cytidine: step 1/3. It participates in pyrimidine metabolism; UMP biosynthesis via salvage pathway; UMP from uridine: step 1/1. This chain is Uridine kinase, found in Erwinia tasmaniensis (strain DSM 17950 / CFBP 7177 / CIP 109463 / NCPPB 4357 / Et1/99).